The chain runs to 115 residues: NADH-ubiquinone oxidoreductase chain 3 (115 aa).

A run of 3 helical transmembrane segments spans residues 4 to 24, 55 to 75, and 83 to 103; these read LTALLVNITLSMLLIIIAFWL, FFLVAITFLLFDLEIALLLPL, and YINIMMSTAFILVSVLALGLA.

The protein belongs to the complex I subunit 3 family. Core subunit of respiratory chain NADH dehydrogenase (Complex I) which is composed of 45 different subunits. Interacts with TMEM186. Interacts with TMEM242.

It is found in the mitochondrion inner membrane. The enzyme catalyses a ubiquinone + NADH + 5 H(+)(in) = a ubiquinol + NAD(+) + 4 H(+)(out). In terms of biological role, core subunit of the mitochondrial membrane respiratory chain NADH dehydrogenase (Complex I) which catalyzes electron transfer from NADH through the respiratory chain, using ubiquinone as an electron acceptor. Essential for the catalytic activity of complex I. The sequence is that of NADH-ubiquinone oxidoreductase chain 3 from Peromyscus polionotus (Oldfield mouse).